Consider the following 343-residue polypeptide: L-threonine 3-dehydrogenase (343 aa).

C40 contributes to the Zn(2+) binding site. Catalysis depends on charge relay system residues T42 and H45. Zn(2+) contacts are provided by H65, E66, C95, C98, C101, and C109. NAD(+) is bound by residues I177, D197, R202, 264–266 (LGI), and 288–289 (IY).

It belongs to the zinc-containing alcohol dehydrogenase family. In terms of assembly, homotetramer. Zn(2+) serves as cofactor.

The protein resides in the cytoplasm. The catalysed reaction is L-threonine + NAD(+) = (2S)-2-amino-3-oxobutanoate + NADH + H(+). The protein operates within amino-acid degradation; L-threonine degradation via oxydo-reductase pathway; glycine from L-threonine: step 1/2. Catalyzes the NAD(+)-dependent oxidation of L-threonine to 2-amino-3-ketobutyrate. The polypeptide is L-threonine 3-dehydrogenase (Vibrio parahaemolyticus serotype O3:K6 (strain RIMD 2210633)).